The chain runs to 395 residues: MRDKGDYLFTSESVSEGHPDKVADRISDTVLDAFLAADPYARVACETLVTTNRIVLAGETRGPSTITREYLAHLARLAVHDIGYEQEGFSWRDAKIDVLLHEQSVDIAVGVDAAGNKDEGAGDQGIMFGYACSETDALMPAPIYYAHLILRRMTELRKIGDARAAGLLPDAKSQVTLRYADGKPVGTTSIVVSTQHEDGMSQDEIKAMLRPLVTELLPDGWMCPDDQFYVNPTGKFVIGGPDGDCGLTGRKIIVDTYGGAAPHGGGAFSGKDPTKVDRSAAYMCRYLAKNVVAAGLATRCTIQVSYAIGVSHPLSVYVDMHGTERDVDHARLETVLRELVNLTPRGIREHLHLNRPIYVPTSAYGHFGREPDDRLGTFTWEKTDLAPALKAAFGR.

Residue His18 participates in ATP binding. A Mg(2+)-binding site is contributed by Asp20. A K(+)-binding site is contributed by Glu46. L-methionine contacts are provided by Glu59 and Gln103. Positions 103-113 (QSVDIAVGVDA) are flexible loop. ATP is bound by residues 170–172 (DAK), 235–236 (KF), Asp244, 250–251 (RK), Ala267, and Lys271. Asp244 provides a ligand contact to L-methionine. Lys275 is a binding site for L-methionine.

The protein belongs to the AdoMet synthase family. Homotetramer; dimer of dimers. The cofactor is Mg(2+). Requires K(+) as cofactor.

The protein localises to the cytoplasm. It catalyses the reaction L-methionine + ATP + H2O = S-adenosyl-L-methionine + phosphate + diphosphate. It functions in the pathway amino-acid biosynthesis; S-adenosyl-L-methionine biosynthesis; S-adenosyl-L-methionine from L-methionine: step 1/1. Functionally, catalyzes the formation of S-adenosylmethionine (AdoMet) from methionine and ATP. The overall synthetic reaction is composed of two sequential steps, AdoMet formation and the subsequent tripolyphosphate hydrolysis which occurs prior to release of AdoMet from the enzyme. The polypeptide is S-adenosylmethionine synthase (Acidiphilium cryptum (strain JF-5)).